The primary structure comprises 356 residues: Methylthioribose-1-phosphate isomerase (356 aa).

Substrate is bound by residues 53–55, arginine 97, and glutamine 203; that span reads RGA. The Proton donor role is filled by aspartate 244. 254–255 serves as a coordination point for substrate; that stretch reads NK.

Belongs to the eIF-2B alpha/beta/delta subunits family. MtnA subfamily.

It carries out the reaction 5-(methylsulfanyl)-alpha-D-ribose 1-phosphate = 5-(methylsulfanyl)-D-ribulose 1-phosphate. Its pathway is amino-acid biosynthesis; L-methionine biosynthesis via salvage pathway; L-methionine from S-methyl-5-thio-alpha-D-ribose 1-phosphate: step 1/6. Functionally, catalyzes the interconversion of methylthioribose-1-phosphate (MTR-1-P) into methylthioribulose-1-phosphate (MTRu-1-P). This is Methylthioribose-1-phosphate isomerase from Rhodopirellula baltica (strain DSM 10527 / NCIMB 13988 / SH1).